An 84-amino-acid polypeptide reads, in one-letter code: Neurotoxin BmK-M10 (84 aa).

An N-terminal signal peptide occupies residues 1 to 19; that stretch reads MNYLVMISFALLLMKGVES. The LCN-type CS-alpha/beta domain maps to 21-83; that stretch reads RDAYIAKPEN…VPIRVPGKCQ (63 aa). Disulfide bonds link C31–C82, C35–C55, C41–C65, and C45–C67. R84 is a propeptide (removed by a carboxypeptidase).

Expressed by the venom gland.

It localises to the secreted. In terms of biological role, binds to voltage-dependent sodium channels (Nav) and voltage-dependent delayed rectifier potassium channels and inhibits the inactivation of the activated channels, thereby blocking neuronal transmission. Administration to mice at a dosage of 0.8 mg/kg produces an analgesic effect. This Olivierus martensii (Manchurian scorpion) protein is Neurotoxin BmK-M10.